The primary structure comprises 86 residues: MSKICQITGKKAMIGNNVSHSKRRTKRTFDLNLFNKKFYYVEQDCWISLSLCAAGLRIINKKGLDAALNDAVAKGYCDWKTIKVVG.

It belongs to the bacterial ribosomal protein bL28 family.

The sequence is that of Large ribosomal subunit protein bL28 from Bacteroides fragilis (strain ATCC 25285 / DSM 2151 / CCUG 4856 / JCM 11019 / LMG 10263 / NCTC 9343 / Onslow / VPI 2553 / EN-2).